The primary structure comprises 213 residues: Thiamine-phosphate synthase (213 aa).

Residues 39-43 and asparagine 71 each bind 4-amino-2-methyl-5-(diphosphooxymethyl)pyrimidine; that span reads QLREK. Residues aspartate 72 and aspartate 91 each coordinate Mg(2+). Serine 110 is a binding site for 4-amino-2-methyl-5-(diphosphooxymethyl)pyrimidine. 136–138 is a binding site for 2-[(2R,5Z)-2-carboxy-4-methylthiazol-5(2H)-ylidene]ethyl phosphate; sequence TGT. Lysine 139 provides a ligand contact to 4-amino-2-methyl-5-(diphosphooxymethyl)pyrimidine. 2-[(2R,5Z)-2-carboxy-4-methylthiazol-5(2H)-ylidene]ethyl phosphate contacts are provided by residues glycine 166 and 186 to 187; that span reads VS.

Belongs to the thiamine-phosphate synthase family. Mg(2+) serves as cofactor.

The enzyme catalyses 2-[(2R,5Z)-2-carboxy-4-methylthiazol-5(2H)-ylidene]ethyl phosphate + 4-amino-2-methyl-5-(diphosphooxymethyl)pyrimidine + 2 H(+) = thiamine phosphate + CO2 + diphosphate. It catalyses the reaction 2-(2-carboxy-4-methylthiazol-5-yl)ethyl phosphate + 4-amino-2-methyl-5-(diphosphooxymethyl)pyrimidine + 2 H(+) = thiamine phosphate + CO2 + diphosphate. The catalysed reaction is 4-methyl-5-(2-phosphooxyethyl)-thiazole + 4-amino-2-methyl-5-(diphosphooxymethyl)pyrimidine + H(+) = thiamine phosphate + diphosphate. It participates in cofactor biosynthesis; thiamine diphosphate biosynthesis; thiamine phosphate from 4-amino-2-methyl-5-diphosphomethylpyrimidine and 4-methyl-5-(2-phosphoethyl)-thiazole: step 1/1. Functionally, condenses 4-methyl-5-(beta-hydroxyethyl)thiazole monophosphate (THZ-P) and 2-methyl-4-amino-5-hydroxymethyl pyrimidine pyrophosphate (HMP-PP) to form thiamine monophosphate (TMP). This chain is Thiamine-phosphate synthase, found in Clostridium botulinum (strain Eklund 17B / Type B).